Consider the following 248-residue polypeptide: uncharacterized protein (248 aa).

The region spanning 7–246 (VQLSNLSWTF…PASTILLPTS (240 aa)) is the ABC transporter domain. Residue 43-50 (GQSGSGKS) coordinates ATP.

This sequence belongs to the ABC transporter superfamily.

This is an uncharacterized protein from Mycobacterium tuberculosis (strain CDC 1551 / Oshkosh).